The following is a 698-amino-acid chain: Polyribonucleotide nucleotidyltransferase (698 aa).

2 residues coordinate Mg(2+): D485 and D491. The 60-residue stretch at 552–611 (PRIHTIKINTDKIRDVIGKGGAVIRSLCEETGTTIEIEDDGTVKIAATSGEQADDAINRI) folds into the KH domain. An S1 motif domain is found at 621 to 689 (GTIYTGKVVR…RQGRVRLSIK (69 aa)).

It belongs to the polyribonucleotide nucleotidyltransferase family. In terms of assembly, component of the RNA degradosome, which is a multiprotein complex involved in RNA processing and mRNA degradation. It depends on Mg(2+) as a cofactor.

It is found in the cytoplasm. It carries out the reaction RNA(n+1) + phosphate = RNA(n) + a ribonucleoside 5'-diphosphate. Functionally, involved in mRNA degradation. Catalyzes the phosphorolysis of single-stranded polyribonucleotides processively in the 3'- to 5'-direction. The chain is Polyribonucleotide nucleotidyltransferase from Psychromonas ingrahamii (strain DSM 17664 / CCUG 51855 / 37).